A 126-amino-acid chain; its full sequence is MAQIPPSLQDLVNRFNQAQAQLQSVLLRKQQYEAELKEVEKALAEIEKLPQDAKIYKSVGNFLIPQTKDAALQELKERKELLELHAKTLTRQESMLREQIDKLRDEINKELGKLRGGAQEAAKGGS.

The protein belongs to the prefoldin subunit beta family. In terms of assembly, heterohexamer of two alpha and four beta subunits.

The protein resides in the cytoplasm. Molecular chaperone capable of stabilizing a range of proteins. Seems to fulfill an ATP-independent, HSP70-like function in archaeal de novo protein folding. In Pyrobaculum neutrophilum (strain DSM 2338 / JCM 9278 / NBRC 100436 / V24Sta) (Thermoproteus neutrophilus), this protein is Prefoldin subunit beta.